We begin with the raw amino-acid sequence, 168 residues long: Large ribosomal subunit protein uL5 (168 aa).

It belongs to the universal ribosomal protein uL5 family. Part of the 50S ribosomal subunit; contacts the 5S rRNA and probably tRNA. Forms a bridge to the 30S subunit in the 70S ribosome.

This is one of the proteins that bind and probably mediate the attachment of the 5S RNA into the large ribosomal subunit, where it forms part of the central protuberance. In the 70S ribosome it contacts protein S13 of the 30S subunit (bridge B1b), connecting the 2 subunits; this bridge is implicated in subunit movement. May contact the P site tRNA; the 5S rRNA and some of its associated proteins might help stabilize positioning of ribosome-bound tRNAs. The protein is Large ribosomal subunit protein uL5 of Methanospirillum hungatei JF-1 (strain ATCC 27890 / DSM 864 / NBRC 100397 / JF-1).